Here is a 289-residue protein sequence, read N- to C-terminus: Oxaloacetate decarboxylase 1 (289 aa).

Ser50 contributes to the substrate binding site. Asp88 is a Mg(2+) binding site. 2 residues coordinate substrate: Arg159 and His235.

This sequence belongs to the isocitrate lyase/PEP mutase superfamily. Oxaloacetate decarboxylase family. Homotetramer; dimer of dimers. Requires Mg(2+) as cofactor.

It carries out the reaction oxaloacetate + H(+) = pyruvate + CO2. Catalyzes the decarboxylation of oxaloacetate into pyruvate. Seems to play a role in maintaining cellular concentrations of bicarbonate and pyruvate. This is Oxaloacetate decarboxylase 1 from Pseudomonas fluorescens (strain Pf0-1).